We begin with the raw amino-acid sequence, 147 residues long: Large ribosomal subunit protein bL9 (147 aa).

It belongs to the bacterial ribosomal protein bL9 family.

Binds to the 23S rRNA. This is Large ribosomal subunit protein bL9 from Campylobacter jejuni subsp. doylei (strain ATCC BAA-1458 / RM4099 / 269.97).